Here is a 188-residue protein sequence, read N- to C-terminus: Quinone reductase (188 aa).

Residues 13-20 (SLRKGSFN), 82-85 (EYNY), and S117 contribute to the FMN site.

This sequence belongs to the SsuE family. Homotetramer. Dimer of dimers. The tetrameric configuration has a central role in chromate reductase activity. FMN serves as cofactor.

It carries out the reaction a quinone + NADH + H(+) = a quinol + NAD(+). The enzyme catalyses a quinone + NADPH + H(+) = a quinol + NADP(+). The catalysed reaction is Cr(6+) + 2 NADH + O2 = Cr(3+) + superoxide + 2 NAD(+) + 2 H(+). It catalyses the reaction Cr(6+) + 2 NADPH + O2 = Cr(3+) + superoxide + 2 NADP(+) + 2 H(+). Catalyzes the reduction of quinones. Acts by simultaneous two-electron transfer, avoiding formation of highly reactive semiquinone intermediates and producing quinols that promote tolerance of H(2)O(2). Quinone reduction is probably the primary biological role of ChrR. Can also reduce toxic chromate to insoluble and less toxic Cr(3+). Catalyzes the transfer of three electrons to Cr(6+) producing Cr(3+) and one electron to molecular oxygen without producing the toxic Cr(5+) species and only producing a minimal amount of reactive oxygen species (ROS). Chromate reduction protects the cell against chromate toxicity, but is likely a secondary activity. This chain is Quinone reductase (chrR), found in Escherichia coli O157:H7.